The sequence spans 286 residues: 4-hydroxybenzoate octaprenyltransferase (286 aa).

The next 9 membrane-spanning stretches (helical) occupy residues 22–42 (IGTL…SAGV), 45–65 (FSLL…GCVI), 90–110 (LTAV…FVLV), 113–133 (LNQF…IYPF), 142–162 (QVVL…AVVG), 169–189 (WLLF…YAMV), 212–232 (LYIA…GWLE), 236–256 (VSYY…QWLI), and 265–285 (FRAF…IMLA).

Belongs to the UbiA prenyltransferase family. The cofactor is Mg(2+).

It localises to the cell inner membrane. The catalysed reaction is all-trans-octaprenyl diphosphate + 4-hydroxybenzoate = 4-hydroxy-3-(all-trans-octaprenyl)benzoate + diphosphate. The protein operates within cofactor biosynthesis; ubiquinone biosynthesis. In terms of biological role, catalyzes the prenylation of para-hydroxybenzoate (PHB) with an all-trans polyprenyl group. Mediates the second step in the final reaction sequence of ubiquinone-8 (UQ-8) biosynthesis, which is the condensation of the polyisoprenoid side chain with PHB, generating the first membrane-bound Q intermediate 3-octaprenyl-4-hydroxybenzoate. The sequence is that of 4-hydroxybenzoate octaprenyltransferase from Tolumonas auensis (strain DSM 9187 / NBRC 110442 / TA 4).